The primary structure comprises 38 residues: Large ribosomal subunit protein bL36 (38 aa).

The protein belongs to the bacterial ribosomal protein bL36 family.

This is Large ribosomal subunit protein bL36 from Kosmotoga olearia (strain ATCC BAA-1733 / DSM 21960 / TBF 19.5.1).